Reading from the N-terminus, the 212-residue chain is Glycerol-3-phosphate acyltransferase (212 aa).

The next 5 helical transmembrane spans lie at 3 to 23, 70 to 90, 110 to 130, 143 to 163, and 164 to 184; these read IIIM…LWIG, IPII…FAII, AGVL…IFLL, ITVA…GFIL, and TDYD…IIIR.

This sequence belongs to the PlsY family. Probably interacts with PlsX.

It localises to the cell membrane. It catalyses the reaction an acyl phosphate + sn-glycerol 3-phosphate = a 1-acyl-sn-glycero-3-phosphate + phosphate. It functions in the pathway lipid metabolism; phospholipid metabolism. Catalyzes the transfer of an acyl group from acyl-phosphate (acyl-PO(4)) to glycerol-3-phosphate (G3P) to form lysophosphatidic acid (LPA). This enzyme utilizes acyl-phosphate as fatty acyl donor, but not acyl-CoA or acyl-ACP. The sequence is that of Glycerol-3-phosphate acyltransferase from Streptococcus agalactiae serotype III (strain NEM316).